Here is a 776-residue protein sequence, read N- to C-terminus: Methionine--tRNA ligase (776 aa).

The 'HIGH' region signature appears at 10-20; it reads PYSNGPIHLGH. Residues Cys-143, Cys-146, Cys-156, and Cys-159 each contribute to the Zn(2+) site. Residues 375 to 379 carry the 'KMSKS' region motif; that stretch reads KFSKS. Lys-378 is a binding site for ATP. Residues 676 to 776 enclose the tRNA-binding domain; that stretch reads DFAKLDMRVG…KPISLGSKVR (101 aa).

Belongs to the class-I aminoacyl-tRNA synthetase family. MetG type 1 subfamily. Homodimer. Zn(2+) serves as cofactor.

It is found in the cytoplasm. It catalyses the reaction tRNA(Met) + L-methionine + ATP = L-methionyl-tRNA(Met) + AMP + diphosphate. In terms of biological role, is required not only for elongation of protein synthesis but also for the initiation of all mRNA translation through initiator tRNA(fMet) aminoacylation. This is Methionine--tRNA ligase (metG) from Nanoarchaeum equitans (strain Kin4-M).